Reading from the N-terminus, the 890-residue chain is Translation initiation factor IF-2 (890 aa).

The disordered stretch occupies residues 45 to 302; the sequence is LIDHLNQKNS…SSLQQGFQKP (258 aa). Positions 67–81 are enriched in polar residues; it reads STLNIPSTGGKSKSV. The span at 92–217 shows a compositional bias: basic and acidic residues; sequence VKRDPQEAER…RMAEENKWTD (126 aa). Basic residues predominate over residues 252–266; sequence GRGRNAKAARPKKGN. The span at 267 to 280 shows a compositional bias: basic and acidic residues; sequence KHAESKADREEARA. The region spanning 389 to 558 is the tr-type G domain; that stretch reads PRAPVVTIMG…LLQAEVLELK (170 aa). The interval 398-405 is G1; sequence GHVDHGKT. 398-405 contacts GTP; the sequence is GHVDHGKT. The interval 423–427 is G2; that stretch reads GITQH. A G3 region spans residues 444–447; the sequence is DTPG. GTP is bound by residues 444–448 and 498–501; these read DTPGH and NKID. Positions 498–501 are G4; the sequence is NKID. Residues 534–536 are G5; that stretch reads SAK. Lysine 808 carries the post-translational modification N6-acetyllysine.

Belongs to the TRAFAC class translation factor GTPase superfamily. Classic translation factor GTPase family. IF-2 subfamily.

Its subcellular location is the cytoplasm. Its function is as follows. One of the essential components for the initiation of protein synthesis. Protects formylmethionyl-tRNA from spontaneous hydrolysis and promotes its binding to the 30S ribosomal subunits. Also involved in the hydrolysis of GTP during the formation of the 70S ribosomal complex. This Shigella dysenteriae serotype 1 (strain Sd197) protein is Translation initiation factor IF-2.